A 400-amino-acid polypeptide reads, in one-letter code: F-box/LRR-repeat protein 14 (400 aa).

One can recognise an F-box domain in the interval 2-48; sequence ETHISCLFPELLAMIFGYLDVRDKGRAAQVCTAWRDAAYHKSVWRGV. Residues 2–48 are required for down-regulation of SNAI1; the sequence is ETHISCLFPELLAMIFGYLDVRDKGRAAQVCTAWRDAAYHKSVWRGV. LRR repeat units lie at residues 144 to 163, 170 to 191, 203 to 225, 229 to 250, and 254 to 275; these read GLEVLELGGCSNITNTGLLL, RLKSLNLRSCRHLSDVGIGHLA, GLEQLTLQDCQKLTDLSLKHISR, GLRLLNLSFCGGISDAGLLHLS, and SLRSLNLRSCDNISDTGIMHLA.

As to quaternary structure, part of a SCF (SKP1-cullin-F-box) ubiquitin-protein ligase complex. Interacts with SKP1 and CUL1. Interacts with SNAI1; the interaction requires the phosphorylation of the two serine residues in the substrate destruction motif D-S-G-X(2,3,4)-S.

The protein resides in the cytoplasm. Functionally, substrate-recognition component of some SCF (SKP1-CUL1-F-box protein)-type E3 ubiquitin-protein ligase complexes. The SCF(FBXL14) complex acts by mediating ubiquitination and subsequent degradation of SNAI1. In Bos taurus (Bovine), this protein is F-box/LRR-repeat protein 14 (FBXL14).